A 757-amino-acid chain; its full sequence is 5-methyltetrahydropteroyltriglutamate--homocysteine methyltransferase (757 aa).

5-methyltetrahydropteroyltri-L-glutamate is bound by residues 16–19 (RELK) and Lys112. Residues 433–435 (IGS) and Glu486 contribute to the L-homocysteine site. L-methionine is bound by residues 433–435 (IGS) and Glu486. 5-methyltetrahydropteroyltri-L-glutamate-binding positions include 517 to 518 (RC) and Trp563. Asp601 is an L-homocysteine binding site. Position 601 (Asp601) interacts with L-methionine. Glu607 is a binding site for 5-methyltetrahydropteroyltri-L-glutamate. Zn(2+) is bound by residues His643, Cys645, and Glu667. The Proton donor role is filled by His696. Zn(2+) is bound at residue Cys728.

The protein belongs to the vitamin-B12 independent methionine synthase family. Requires Zn(2+) as cofactor.

It carries out the reaction 5-methyltetrahydropteroyltri-L-glutamate + L-homocysteine = tetrahydropteroyltri-L-glutamate + L-methionine. The protein operates within amino-acid biosynthesis; L-methionine biosynthesis via de novo pathway; L-methionine from L-homocysteine (MetE route): step 1/1. Functionally, catalyzes the transfer of a methyl group from 5-methyltetrahydrofolate to homocysteine resulting in methionine formation. This chain is 5-methyltetrahydropteroyltriglutamate--homocysteine methyltransferase, found in Histophilus somni (strain 2336) (Haemophilus somnus).